Here is a 536-residue protein sequence, read N- to C-terminus: MSADLARIAEEVSHRRTFAIISHPDAGKTTLTEKLLLFSGAIQMAGTVKGKKGGKFATSDWMEIEKQRGISVASSVMQFDYRDHTVNLLDTPGHQDFSEDTYRVLTAVDSALMVIDAAKGVEEQTIKLLNVCRLRNTPIVTFMNKCDREVRDSLELLDEVENVLKIRCAPITWPIGMGKTFRGVYSLLSDAVILFEAGTEKLVSDIEVIQGIDNPRLDELFPLEMEQLRMEIELVKGASNEWSLEEFLAGELTPVFFGSAINNFGVREILNALIDWAPAPQERDATVRNVDPKEAKFSGFVFKIQANMDPKHRDRIAFLRVCSGQFERGMKMKHLRLNRDIAASSVVTFMSHDREIVEEAFAGDIIGIPNHGNIQIGDSFSEGEDLAFTGIPFFAPELFRSVRIKNPLKLKQLQKGLQQLGEEGAVQVFKPHSGGDLILGAVGVLQFEVVASRLAAEYGVDAIFESASIWSARWFSCDDRKKLDEFVKTLQMNIATDAGGNLAYLAPNRVNLQLTQERWPDIVFHETREHAVKLND.

Residues Ser-13–Gln-281 form the tr-type G domain. GTP is bound by residues Ser-22–Thr-29, Asp-90–His-94, and Asn-144–Asp-147.

This sequence belongs to the TRAFAC class translation factor GTPase superfamily. Classic translation factor GTPase family. PrfC subfamily.

The protein resides in the cytoplasm. In terms of biological role, increases the formation of ribosomal termination complexes and stimulates activities of RF-1 and RF-2. It binds guanine nucleotides and has strong preference for UGA stop codons. It may interact directly with the ribosome. The stimulation of RF-1 and RF-2 is significantly reduced by GTP and GDP, but not by GMP. The polypeptide is Peptide chain release factor 3 (Chromobacterium violaceum (strain ATCC 12472 / DSM 30191 / JCM 1249 / CCUG 213 / NBRC 12614 / NCIMB 9131 / NCTC 9757 / MK)).